A 980-amino-acid polypeptide reads, in one-letter code: Ankycorbin (980 aa).

The residue at position 1 (Met-1) is an N-acetylmethionine. Ser-11 bears the Phosphoserine mark. 7 ANK repeats span residues 18-51 (KNDD…KHDS), 52-81 (EGKT…DVTA), 85-114 (TGHS…PAES), 118-147 (SGKT…PINL), 151-180 (DGNI…DVNS), 184-213 (SGRT…DLNL), and 217-247 (LGYN…DADL). The segment covering 247 to 259 (LKTPTKPKQHDQV) has biased composition (basic and acidic residues). A disordered region spans residues 247-301 (LKTPTKPKQHDQVSKISSERSGTPKKRKAPPPPISPTQLSDVSSPRSITSTPLSG). Position 249 is a phosphothreonine (Thr-249). The Nuclear localization signal signature appears at 270-276 (PKKRKAP). A phosphoserine mark is found at Ser-281, Ser-286, and Ser-293. Over residues 282-299 (PTQLSDVSSPRSITSTPL) the composition is skewed to polar residues. Thr-295 and Thr-297 each carry phosphothreonine. Phosphoserine occurs at positions 300, 304, 318, 327, 329, 340, 341, 350, 358, 419, 512, 515, 667, and 915. The stretch at 349-374 (LSLLQAKVASLTLHNKELQDKLQAKS) forms a coiled coil. Residues 387–423 (YHSTQTDLGPSLGKPGETSPPDSKSSPSVLIHSLGKS) are disordered. Positions 425–947 (TDNDVRIQQL…QHQEVISVYR (523 aa)) form a coiled coil.

Interacts with PALLD. Associates with actin. However, does not bind F-actin directly. As to expression, highly expressed in placenta, muscle, kidney and testis. Moderately expressed in heart, brain, lung, liver and intestine. Isoform 2 is widely expressed and expressed in fetal and adult testes, and spermatozoa.

Its subcellular location is the cytoplasm. It is found in the cytoskeleton. It localises to the stress fiber. The protein localises to the cell cortex. The protein resides in the cell junction. Its subcellular location is the nucleus. Its function is as follows. Plays a role in actin regulation at the ectoplasmic specialization, a type of cell junction specific to testis. Important for establishment of sperm polarity and normal spermatid adhesion. May also promote integrity of Sertoli cell tight junctions at the blood-testis barrier. The polypeptide is Ankycorbin (RAI14) (Homo sapiens (Human)).